A 47-amino-acid polypeptide reads, in one-letter code: Large ribosomal subunit protein bL27c-2 (47 aa).

Belongs to the bacterial ribosomal protein bL27 family.

It is found in the plastid. It localises to the chloroplast. In Cyanidium caldarium (Red alga), this protein is Large ribosomal subunit protein bL27c-2.